Consider the following 178-residue polypeptide: Ribosome maturation factor RimM (178 aa).

The PRC barrel domain maps to 101–178; the sequence is ADEYYWYQLV…VMRVEWDADF (78 aa).

The protein belongs to the RimM family. In terms of assembly, binds ribosomal protein uS19.

It localises to the cytoplasm. Its function is as follows. An accessory protein needed during the final step in the assembly of 30S ribosomal subunit, possibly for assembly of the head region. Essential for efficient processing of 16S rRNA. May be needed both before and after RbfA during the maturation of 16S rRNA. It has affinity for free ribosomal 30S subunits but not for 70S ribosomes. This chain is Ribosome maturation factor RimM, found in Pseudomonas putida (strain ATCC 700007 / DSM 6899 / JCM 31910 / BCRC 17059 / LMG 24140 / F1).